Reading from the N-terminus, the 450-residue chain is tRNA modification GTPase MnmE (450 aa).

Residues Lys-21, Glu-78, and Lys-117 each contribute to the (6S)-5-formyl-5,6,7,8-tetrahydrofolate site. The TrmE-type G domain maps to 213–376 (GHALSIIGKP…LSQKISAFFP (164 aa)). Asn-223 lines the K(+) pocket. Residues 223–228 (NAGKSS), 242–248 (SDIKGTT), and 267–270 (DTAG) each bind GTP. Position 227 (Ser-227) interacts with Mg(2+). K(+) contacts are provided by Ser-242, Ile-244, and Thr-247. A Mg(2+)-binding site is contributed by Thr-248. Lys-450 is a binding site for (6S)-5-formyl-5,6,7,8-tetrahydrofolate.

It belongs to the TRAFAC class TrmE-Era-EngA-EngB-Septin-like GTPase superfamily. TrmE GTPase family. In terms of assembly, homodimer. Heterotetramer of two MnmE and two MnmG subunits. K(+) serves as cofactor.

It is found in the cytoplasm. Exhibits a very high intrinsic GTPase hydrolysis rate. Involved in the addition of a carboxymethylaminomethyl (cmnm) group at the wobble position (U34) of certain tRNAs, forming tRNA-cmnm(5)s(2)U34. The polypeptide is tRNA modification GTPase MnmE (Helicobacter acinonychis (strain Sheeba)).